The primary structure comprises 1468 residues: Potassium channel K2 (1468 aa).

The next 6 helical transmembrane spans lie at 48–68 (MIYI…YWIY), 146–165 (FNCY…WYIS), 185–209 (IYIY…IISY), 221–240 (LLID…RHFF), 246–264 (IDIY…FLNV), and 285–306 (IILG…IQGI). Positions 326–344 (YFYFSIISISTVGYGDIIP) form an intramembrane region, pore-forming. Residues 351-368 (VICIFFIFWTFIWVPIQF) traverse the membrane as a helical segment. Residues 804 to 823 (TCARTNESHKNNRLRSRRSQ) form a disordered region. A compositionally biased stretch (basic residues) spans 814–823 (NNRLRSRRSQ). Positions 1141–1185 (KSNKNSNNNNKCEQIKQLNNNLTFKKNEKKTKSNKQNTNDTLERR) form a coiled coil.

It is found in the membrane. May be involved in transmembrane potassium transport at the subcellular level not affecting bulk potassium transport across the plasma membrane. This chain is Potassium channel K2, found in Plasmodium berghei (strain Anka).